A 360-amino-acid chain; its full sequence is Peptide chain release factor 1 (360 aa).

At glutamine 237 the chain carries N5-methylglutamine.

It belongs to the prokaryotic/mitochondrial release factor family. In terms of processing, methylated by PrmC. Methylation increases the termination efficiency of RF1.

The protein resides in the cytoplasm. Its function is as follows. Peptide chain release factor 1 directs the termination of translation in response to the peptide chain termination codons UAG and UAA. This chain is Peptide chain release factor 1, found in Nitrosococcus oceani (strain ATCC 19707 / BCRC 17464 / JCM 30415 / NCIMB 11848 / C-107).